Reading from the N-terminus, the 338-residue chain is Phenylalanine--tRNA ligase alpha subunit (338 aa).

Glu-253 lines the Mg(2+) pocket.

It belongs to the class-II aminoacyl-tRNA synthetase family. Phe-tRNA synthetase alpha subunit type 1 subfamily. In terms of assembly, tetramer of two alpha and two beta subunits. Requires Mg(2+) as cofactor.

Its subcellular location is the cytoplasm. It carries out the reaction tRNA(Phe) + L-phenylalanine + ATP = L-phenylalanyl-tRNA(Phe) + AMP + diphosphate + H(+). The polypeptide is Phenylalanine--tRNA ligase alpha subunit (Syntrophotalea carbinolica (strain DSM 2380 / NBRC 103641 / GraBd1) (Pelobacter carbinolicus)).